Consider the following 549-residue polypeptide: Glucose-6-phosphate isomerase (549 aa).

3 positions are modified to N6-acetyllysine: Lys80, Lys228, and Lys234. Catalysis depends on Glu355, which acts as the Proton donor. Catalysis depends on residues His386 and Lys514.

This sequence belongs to the GPI family.

The protein resides in the cytoplasm. It carries out the reaction alpha-D-glucose 6-phosphate = beta-D-fructose 6-phosphate. It functions in the pathway carbohydrate biosynthesis; gluconeogenesis. It participates in carbohydrate degradation; glycolysis; D-glyceraldehyde 3-phosphate and glycerone phosphate from D-glucose: step 2/4. Its function is as follows. Catalyzes the reversible isomerization of glucose-6-phosphate to fructose-6-phosphate. The polypeptide is Glucose-6-phosphate isomerase (Shigella flexneri serotype 5b (strain 8401)).